We begin with the raw amino-acid sequence, 92 residues long: UPF0250 protein XOO3732 (92 aa).

The protein belongs to the UPF0250 family.

This is UPF0250 protein XOO3732 from Xanthomonas oryzae pv. oryzae (strain MAFF 311018).